Consider the following 173-residue polypeptide: Ribulose bisphosphate carboxylase small subunit, chloroplastic 3 (173 aa).

The N-terminal 49 residues, 1–49 (MASIPATVATVAQANMVAPFTGLKSNAAFPVTKKVNDFSTLPSNGGRVQ), are a transit peptide targeting the chloroplast.

The protein belongs to the RuBisCO small chain family. As to quaternary structure, heterohexadecamer of 8 large and 8 small subunits.

Its subcellular location is the plastid. It localises to the chloroplast. RuBisCO catalyzes two reactions: the carboxylation of D-ribulose 1,5-bisphosphate, the primary event in carbon dioxide fixation, as well as the oxidative fragmentation of the pentose substrate. Both reactions occur simultaneously and in competition at the same active site. Although the small subunit is not catalytic it is essential for maximal activity. The chain is Ribulose bisphosphate carboxylase small subunit, chloroplastic 3 from Flaveria pringlei.